The following is a 264-amino-acid chain: Thymidylate synthase (264 aa).

A dUMP-binding site is contributed by Arg21. Residue His51 coordinates (6R)-5,10-methylene-5,6,7,8-tetrahydrofolate. 126 to 127 is a dUMP binding site; the sequence is RR. Cys146 (nucleophile) is an active-site residue. Residues 166-169, Asn177, and 207-209 contribute to the dUMP site; these read RSGD and HLY. Residue Asp169 participates in (6R)-5,10-methylene-5,6,7,8-tetrahydrofolate binding. Ala263 contacts (6R)-5,10-methylene-5,6,7,8-tetrahydrofolate.

This sequence belongs to the thymidylate synthase family. Bacterial-type ThyA subfamily. In terms of assembly, homodimer.

It is found in the cytoplasm. It catalyses the reaction dUMP + (6R)-5,10-methylene-5,6,7,8-tetrahydrofolate = 7,8-dihydrofolate + dTMP. The protein operates within pyrimidine metabolism; dTTP biosynthesis. Functionally, catalyzes the reductive methylation of 2'-deoxyuridine-5'-monophosphate (dUMP) to 2'-deoxythymidine-5'-monophosphate (dTMP) while utilizing 5,10-methylenetetrahydrofolate (mTHF) as the methyl donor and reductant in the reaction, yielding dihydrofolate (DHF) as a by-product. This enzymatic reaction provides an intracellular de novo source of dTMP, an essential precursor for DNA biosynthesis. The protein is Thymidylate synthase of Xanthomonas campestris pv. campestris (strain 8004).